The following is a 145-amino-acid chain: ATP synthase epsilon chain (145 aa).

Positions 93 to 104 (AEAEKARARAQE) are enriched in basic and acidic residues. The tract at residues 93–113 (AEAEKARARAQEALKNPDASK) is disordered.

It belongs to the ATPase epsilon chain family. In terms of assembly, F-type ATPases have 2 components, CF(1) - the catalytic core - and CF(0) - the membrane proton channel. CF(1) has five subunits: alpha(3), beta(3), gamma(1), delta(1), epsilon(1). CF(0) has three main subunits: a, b and c.

It is found in the cell inner membrane. Functionally, produces ATP from ADP in the presence of a proton gradient across the membrane. The protein is ATP synthase epsilon chain of Francisella philomiragia subsp. philomiragia (strain ATCC 25017 / CCUG 19701 / FSC 153 / O#319-036).